A 100-amino-acid polypeptide reads, in one-letter code: Ubiquitin-related modifier 1 (100 aa).

Position 100 is a 1-thioglycine (glycine 100). Glycine 100 is covalently cross-linked (Glycyl lysine isopeptide (Gly-Lys) (interchain with K-? in acceptor proteins)).

Belongs to the URM1 family. In terms of processing, C-terminal thiocarboxylation occurs in 2 steps, it is first acyl-adenylated (-COAMP) via the hesA/moeB/thiF part of UBA4, then thiocarboxylated (-COSH) via the rhodanese domain of UBA4.

The protein resides in the cytoplasm. It participates in tRNA modification; 5-methoxycarbonylmethyl-2-thiouridine-tRNA biosynthesis. Functionally, acts as a sulfur carrier required for 2-thiolation of mcm(5)S(2)U at tRNA wobble positions of cytosolic tRNA(Lys), tRNA(Glu) and tRNA(Gln). Serves as sulfur donor in tRNA 2-thiolation reaction by being thiocarboxylated (-COSH) at its C-terminus by the MOCS3 homolog UBA4. The sulfur is then transferred to tRNA to form 2-thiolation of mcm(5)S(2)U. Prior mcm(5) tRNA modification by the elongator complex is required for 2-thiolation. Also acts as a ubiquitin-like protein (UBL) that is covalently conjugated via an isopeptide bond to lysine residues of target proteins such as AHP1. The thiocarboxylated form serves as substrate for conjugation and oxidative stress specifically induces the formation of UBL-protein conjugates. The sequence is that of Ubiquitin-related modifier 1 from Eremothecium gossypii (strain ATCC 10895 / CBS 109.51 / FGSC 9923 / NRRL Y-1056) (Yeast).